A 152-amino-acid chain; its full sequence is Ribosome maturation factor RimP (152 aa).

It belongs to the RimP family.

It is found in the cytoplasm. Its function is as follows. Required for maturation of 30S ribosomal subunits. This chain is Ribosome maturation factor RimP, found in Erwinia tasmaniensis (strain DSM 17950 / CFBP 7177 / CIP 109463 / NCPPB 4357 / Et1/99).